Consider the following 178-residue polypeptide: Large ribosomal subunit protein uL6 (178 aa).

This sequence belongs to the universal ribosomal protein uL6 family. Part of the 50S ribosomal subunit.

In terms of biological role, this protein binds to the 23S rRNA, and is important in its secondary structure. It is located near the subunit interface in the base of the L7/L12 stalk, and near the tRNA binding site of the peptidyltransferase center. The chain is Large ribosomal subunit protein uL6 from Campylobacter lari (strain RM2100 / D67 / ATCC BAA-1060).